A 276-amino-acid chain; its full sequence is Ribosomal RNA small subunit methyltransferase A (276 aa).

Residues Asn27, Leu29, Gly54, Glu75, Asp101, and Asn122 each contribute to the S-adenosyl-L-methionine site.

It belongs to the class I-like SAM-binding methyltransferase superfamily. rRNA adenine N(6)-methyltransferase family. RsmA subfamily.

The protein localises to the cytoplasm. It catalyses the reaction adenosine(1518)/adenosine(1519) in 16S rRNA + 4 S-adenosyl-L-methionine = N(6)-dimethyladenosine(1518)/N(6)-dimethyladenosine(1519) in 16S rRNA + 4 S-adenosyl-L-homocysteine + 4 H(+). Specifically dimethylates two adjacent adenosines (A1518 and A1519) in the loop of a conserved hairpin near the 3'-end of 16S rRNA in the 30S particle. May play a critical role in biogenesis of 30S subunits. This is Ribosomal RNA small subunit methyltransferase A from Brucella abortus biovar 1 (strain 9-941).